We begin with the raw amino-acid sequence, 427 residues long: Protein TIFY 6a (427 aa).

Over residues 1-25 the composition is skewed to basic and acidic residues; sequence MERDFLGAIGRKEEAAGKPEEHSDY. The interval 1–33 is disordered; that stretch reads MERDFLGAIGRKEEAAGKPEEHSDYRGGGGGAS. A Tify domain is found at 196 to 231; that stretch reads QNPKVTQMTIFYDGLVNVFDNIPVEKAQELMLLASR. 2 stretches are compositionally biased toward polar residues: residues 293-303 and 317-327; these read LPKSSSSSNDS and PLSQASPSQPI. The disordered stretch occupies residues 293 to 327; sequence LPKSSSSSNDSAGPKSGGLPLAVTPLSQASPSQPI. A Jas motif is present at residues 343-367; it reads PQARKASLARFLEKRKERVSSVAPY. Positions 345–352 match the Nuclear localization signal motif; the sequence is ARKASLAR. A disordered region spans residues 360–427; sequence RVSSVAPYPS…QEPPSTKLQI (68 aa). 2 stretches are compositionally biased toward polar residues: residues 369–402 and 411–427; these read SSKS…NNCE and RNIS…KLQI.

It belongs to the TIFY/JAZ family. Post-translationally, ubiquitinated.

Its subcellular location is the nucleus. Its function is as follows. Repressor of jasmonate responses. This is Protein TIFY 6a from Oryza sativa subsp. indica (Rice).